The chain runs to 349 residues: Paired box protein Pax-4 (349 aa).

Residues 5-131 (GLSSVNQLGG…SSINRVLRAL (127 aa)) constitute a DNA-binding region (paired). The interval 8 to 64 (SVNQLGGLFVNGRPLPLDTRQQIVQLAIRGMRPCDISRSLKVSNGCVSKILGRYYRT) is PAI subdomain. The interval 83 to 131 (AVVARIAQLKDEYPALFAWEIQHQLCTEGLCTQDKAPSVSSINRVLRAL) is RED subdomain. A DNA-binding region (homeobox) is located at residues 170 to 229 (SHRNRTIFSPGQAEALEKEFQRGQYPDSVARGKLAAATSLPEDTVRVWFSNRRAKWRRQE). The tract at residues 278–349 (FCQLCCGTAP…VPSTHCSNWP (72 aa)) is transcription repression.

The protein belongs to the paired homeobox family. As to expression, expressed in early pancreas. Later restricted to beta cells. Undetectable in adult islets.

The protein resides in the nucleus. Plays an important role in the differentiation and development of pancreatic islet beta cells. Transcriptional repressor that competes with PAX6 in binding to a common element in the glucagon, insulin and somatostatin promoters. The sequence is that of Paired box protein Pax-4 (Pax4) from Mus musculus (Mouse).